Here is a 286-residue protein sequence, read N- to C-terminus: Bifunctional protein FolD (286 aa).

NADP(+) contacts are provided by residues 164-166 (GAS), Ile189, and Ile230.

Belongs to the tetrahydrofolate dehydrogenase/cyclohydrolase family. In terms of assembly, homodimer.

The enzyme catalyses (6R)-5,10-methylene-5,6,7,8-tetrahydrofolate + NADP(+) = (6R)-5,10-methenyltetrahydrofolate + NADPH. It catalyses the reaction (6R)-5,10-methenyltetrahydrofolate + H2O = (6R)-10-formyltetrahydrofolate + H(+). It functions in the pathway one-carbon metabolism; tetrahydrofolate interconversion. Catalyzes the oxidation of 5,10-methylenetetrahydrofolate to 5,10-methenyltetrahydrofolate and then the hydrolysis of 5,10-methenyltetrahydrofolate to 10-formyltetrahydrofolate. The polypeptide is Bifunctional protein FolD (Wolinella succinogenes (strain ATCC 29543 / DSM 1740 / CCUG 13145 / JCM 31913 / LMG 7466 / NCTC 11488 / FDC 602W) (Vibrio succinogenes)).